The following is a 79-amino-acid chain: Small ribosomal subunit protein uS11 (79 aa).

At Ser-14 the chain carries Phosphoserine. Residues Lys-59 and Lys-61 each participate in a glycyl lysine isopeptide (Lys-Gly) (interchain with G-Cter in SUMO2) cross-link.

Belongs to the universal ribosomal protein uS11 family. In terms of assembly, component of the small ribosomal subunit. Part of the small subunit (SSU) processome, composed of more than 70 proteins and the RNA chaperone small nucleolar RNA (snoRNA) U3.

The protein resides in the cytoplasm. The protein localises to the nucleus. It is found in the nucleolus. Component of the small ribosomal subunit. The ribosome is a large ribonucleoprotein complex responsible for the synthesis of proteins in the cell. Part of the small subunit (SSU) processome, first precursor of the small eukaryotic ribosomal subunit. During the assembly of the SSU processome in the nucleolus, many ribosome biogenesis factors, an RNA chaperone and ribosomal proteins associate with the nascent pre-rRNA and work in concert to generate RNA folding, modifications, rearrangements and cleavage as well as targeted degradation of pre-ribosomal RNA by the RNA exosome. The protein is Small ribosomal subunit protein uS11 (RPS14) of Sus scrofa (Pig).